The sequence spans 528 residues: UDP-glucuronosyltransferase 2B10 (528 aa).

The N-terminal stretch at 1–23 (MALKWTTVLLIQLSFYFSSGSCG) is a signal peptide. N-linked (GlcNAc...) asparagine glycosylation is present at N66. K134 carries the N6-succinyllysine modification. N-linked (GlcNAc...) asparagine glycosylation is found at N314 and N481. Residues 492 to 512 (VIGFLLACVATVLFIITKCCL) traverse the membrane as a helical segment.

This sequence belongs to the UDP-glycosyltransferase family.

The protein localises to the microsome membrane. Its subcellular location is the endoplasmic reticulum membrane. The catalysed reaction is glucuronate acceptor + UDP-alpha-D-glucuronate = acceptor beta-D-glucuronoside + UDP + H(+). Functionally, UDPGT is of major importance in the conjugation and subsequent elimination of potentially toxic xenobiotics and endogenous compounds. This is UDP-glucuronosyltransferase 2B10 (UGT2B10) from Homo sapiens (Human).